Consider the following 320-residue polypeptide: Cytochrome f (320 aa).

The first 35 residues, M1 to A35, serve as a signal peptide directing secretion. Residues Y36, C56, C59, and H60 each contribute to the heme site. A helical membrane pass occupies residues V286–K306.

The protein belongs to the cytochrome f family. As to quaternary structure, the 4 large subunits of the cytochrome b6-f complex are cytochrome b6, subunit IV (17 kDa polypeptide, petD), cytochrome f and the Rieske protein, while the 4 small subunits are PetG, PetL, PetM and PetN. The complex functions as a dimer. The cofactor is heme.

The protein resides in the plastid. It is found in the chloroplast thylakoid membrane. In terms of biological role, component of the cytochrome b6-f complex, which mediates electron transfer between photosystem II (PSII) and photosystem I (PSI), cyclic electron flow around PSI, and state transitions. The sequence is that of Cytochrome f from Lactuca sativa (Garden lettuce).